Reading from the N-terminus, the 105-residue chain is Large ribosomal subunit protein bL21c (105 aa).

This sequence belongs to the bacterial ribosomal protein bL21 family. In terms of assembly, part of the 50S ribosomal subunit.

The protein localises to the plastid. The protein resides in the chloroplast. This protein binds to 23S rRNA. The polypeptide is Large ribosomal subunit protein bL21c (Phaeodactylum tricornutum (strain CCAP 1055/1)).